Consider the following 208-residue polypeptide: Thiamine-phosphate synthase (208 aa).

4-amino-2-methyl-5-(diphosphooxymethyl)pyrimidine-binding positions include 37–39 and Asn70; that span reads QVR. The Mg(2+) site is built by Asp71 and Asp90. Thr109 contributes to the 4-amino-2-methyl-5-(diphosphooxymethyl)pyrimidine binding site. 135-137 is a binding site for 2-[(2R,5Z)-2-carboxy-4-methylthiazol-5(2H)-ylidene]ethyl phosphate; sequence TTS. Lys138 contributes to the 4-amino-2-methyl-5-(diphosphooxymethyl)pyrimidine binding site. Gly166 provides a ligand contact to 2-[(2R,5Z)-2-carboxy-4-methylthiazol-5(2H)-ylidene]ethyl phosphate.

Belongs to the thiamine-phosphate synthase family. The cofactor is Mg(2+).

The enzyme catalyses 2-[(2R,5Z)-2-carboxy-4-methylthiazol-5(2H)-ylidene]ethyl phosphate + 4-amino-2-methyl-5-(diphosphooxymethyl)pyrimidine + 2 H(+) = thiamine phosphate + CO2 + diphosphate. The catalysed reaction is 2-(2-carboxy-4-methylthiazol-5-yl)ethyl phosphate + 4-amino-2-methyl-5-(diphosphooxymethyl)pyrimidine + 2 H(+) = thiamine phosphate + CO2 + diphosphate. It catalyses the reaction 4-methyl-5-(2-phosphooxyethyl)-thiazole + 4-amino-2-methyl-5-(diphosphooxymethyl)pyrimidine + H(+) = thiamine phosphate + diphosphate. Its pathway is cofactor biosynthesis; thiamine diphosphate biosynthesis; thiamine phosphate from 4-amino-2-methyl-5-diphosphomethylpyrimidine and 4-methyl-5-(2-phosphoethyl)-thiazole: step 1/1. In terms of biological role, condenses 4-methyl-5-(beta-hydroxyethyl)thiazole monophosphate (THZ-P) and 2-methyl-4-amino-5-hydroxymethyl pyrimidine pyrophosphate (HMP-PP) to form thiamine monophosphate (TMP). The protein is Thiamine-phosphate synthase of Salinispora arenicola (strain CNS-205).